The sequence spans 1073 residues: MTKKNHALIPIPGPSVWPLLGNLFDIDTEHGLASVLEMGRSYGDIFQLVLGGNKLVFLQTHALFDEVCDESRFCKVVVSGLGNLRAGVNDGLFTAHDGEHNWGVAHRIIMPIFGPIKIRETLGGMKDVCQELSLKWARYGPDHRIDIAGDLTRLTLDTIAFCTMGYRFNSFYRNSDVHPFVKSMVGFLREADKSSMIPEYLNAFRWKARRSFLGDIASMREMSMMILNLRRGNPSDRDDLLNALLHGRDPKTGEGMSDESIINNLITFLVAGHETTSGALSFVFYYLLTNPESLKNAREEVDRVIGAGNITADHLSKLPYIDAVLREALRLNPTGPAITLGAREDTTLGGKYAVKKGEPVLCMFHNIHRDKKVYGEDADEWKPERMMDENFNKLPKNAWKPFGNGTRGCIGRAFAWQESQLVIASILQNFDLTLDNPDYKLEIVETLTIKPGNFYVRAKLRSGRTPRELCGFSNPISTNIQIKNGTIAPANDGQVGNSTPVTILYGSNSGTCEALAHRLARDAPSYGYSVTTVATLDSVIGILPRAKDELVVIITCSYDGLPADNAVRFCNWLKTLDEDALGGMPFAVFACGHHDWAKTFYKVPIMIDELLARAGAHRVAQMGKANSAVSDMFSDLENWEDEHLWSSSSAAGNETVDNVARTEVKQDITITNPRARALHHNAVECIVSETHKLSESGSALKYHVEIQLPANMKYAPGDHLSVLPINPRQNVRRALARFHLAGDSVLSVARIGHMGTLGQETLSAFDVFASYVELSQPATRRNIATLLSVTPEGEGRYELAELGGAAFESQIRDMRVSVLDLLERYKAIKLCVGAFIDMLPPLRVRTYSISSSALWKPSHASLTISVLAQPALSGQGSFLGVASNFLADLVPGDAVHFTIRPCKKQFHLPDDASAHPIIMVAAGSGIAPFRGFIQDRALQRRNGVQLQPAILFFGCRGSKQDDLYRQELDEFEAEGVVSVRRAFSGEETVSISESRMYVQDRMWADRAEVIQLWNLGAKIYVCGGINMADGVREIFNEIVGPTEVDGKRGAESLNKLSEETMSARYVAEIFSQT.

C409 contributes to the heme binding site. One can recognise a Flavodoxin-like domain in the interval 501–644 (VTILYGSNSG…DLENWEDEHL (144 aa)). FMN-binding positions include 507–511 (SNSGT) and 588–620 (VFAC…HRVA). The 230-residue stretch at 680-909 (HNAVECIVSE…RPCKKQFHLP (230 aa)) folds into the FAD-binding FR-type domain.

In the N-terminal section; belongs to the cytochrome P450 family. It depends on FAD as a cofactor. Requires FMN as cofactor. The cofactor is heme.

It catalyses the reaction 2 oxidized [cytochrome P450] + NADPH = 2 reduced [cytochrome P450] + NADP(+) + H(+). The catalysed reaction is an organic molecule + reduced [NADPH--hemoprotein reductase] + O2 = an alcohol + oxidized [NADPH--hemoprotein reductase] + H2O + H(+). The enzyme catalyses dodecanoate + reduced [NADPH--hemoprotein reductase] + O2 = 10-hydroxydodecanoate + oxidized [NADPH--hemoprotein reductase] + H2O + H(+). It carries out the reaction tetradecanoate + reduced [NADPH--hemoprotein reductase] + O2 = 12-hydroxytetradecanoate + oxidized [NADPH--hemoprotein reductase] + H2O + H(+). Its function is as follows. Self-sufficient cytochrome P450 monooxygenase that catalyzes the regioselective in-chain hydroxylation of alkanes, fatty alcohols, and fatty acids, giving sub-terminal hydroxylation by acting preferentially on the omega-2 position. Prefers fatty acids as substrates, since it hydroxylates the small amounts of dodecanoic acid formed in the presence of an excess of 1-dodecanol. This Oidiodendron maius (strain Zn) protein is Self-sufficient cytochrome P450 monooxygenase CYP505AG1.